The chain runs to 306 residues: UDP-3-O-acyl-N-acetylglucosamine deacetylase (306 aa).

The Zn(2+) site is built by H79, H238, and D242. The active-site Proton donor is H265.

It belongs to the LpxC family. Requires Zn(2+) as cofactor.

It catalyses the reaction a UDP-3-O-[(3R)-3-hydroxyacyl]-N-acetyl-alpha-D-glucosamine + H2O = a UDP-3-O-[(3R)-3-hydroxyacyl]-alpha-D-glucosamine + acetate. Its pathway is glycolipid biosynthesis; lipid IV(A) biosynthesis; lipid IV(A) from (3R)-3-hydroxytetradecanoyl-[acyl-carrier-protein] and UDP-N-acetyl-alpha-D-glucosamine: step 2/6. Functionally, catalyzes the hydrolysis of UDP-3-O-myristoyl-N-acetylglucosamine to form UDP-3-O-myristoylglucosamine and acetate, the committed step in lipid A biosynthesis. The chain is UDP-3-O-acyl-N-acetylglucosamine deacetylase from Shewanella sp. (strain W3-18-1).